Consider the following 227-residue polypeptide: Urease accessory protein UreG (227 aa).

Over residues 1 to 10 (MHLDHAHTHD) the composition is skewed to basic and acidic residues. The disordered stretch occupies residues 1-22 (MHLDHAHTHDGPSAVSADAHRP). Residue 35 to 42 (GPVGSGKT) participates in GTP binding.

It belongs to the SIMIBI class G3E GTPase family. UreG subfamily. As to quaternary structure, homodimer. UreD, UreF and UreG form a complex that acts as a GTP-hydrolysis-dependent molecular chaperone, activating the urease apoprotein by helping to assemble the nickel containing metallocenter of UreC. The UreE protein probably delivers the nickel.

Its subcellular location is the cytoplasm. Its function is as follows. Facilitates the functional incorporation of the urease nickel metallocenter. This process requires GTP hydrolysis, probably effectuated by UreG. In Streptomyces avermitilis (strain ATCC 31267 / DSM 46492 / JCM 5070 / NBRC 14893 / NCIMB 12804 / NRRL 8165 / MA-4680), this protein is Urease accessory protein UreG.